The chain runs to 198 residues: Large ribosomal subunit protein bL12m (198 aa).

Residues Met1–Leu36 constitute a mitochondrion transit peptide. The span at Gly106 to Glu115 shows a compositional bias: low complexity. The segment at Gly106–Glu126 is disordered. An N6-acetyllysine mark is found at Lys125, Lys138, Lys142, and Lys144. Lys150 is subject to N6-acetyllysine; alternate. Lys150 bears the N6-succinyllysine; alternate mark. Lys150 participates in a covalent cross-link: Glycyl lysine isopeptide (Lys-Gly) (interchain with G-Cter in ubiquitin). Lys162 is modified (N6-succinyllysine). N6-acetyllysine is present on residues Lys163 and Lys173. Lys178 is subject to N6-acetyllysine; alternate. Residue Lys178 is modified to N6-succinyllysine; alternate. An N6-acetyllysine modification is found at Lys185.

Belongs to the bacterial ribosomal protein bL12 family. Component of the mitochondrial ribosome large subunit (39S) which comprises a 16S rRNA and about 50 distinct proteins. Interacts with NOA1. Post-translationally, two mature forms are produced by differential two-step proteolytic cleavage. Cleaved by the mitochondrial processing protease to produce the long mature form and subsequently by the mitochondrial intermediate protease to produce the short mature form. In terms of processing, in the presence of CUL3, undergoes 'Lys-63'-linked ubiquitination at Lys-150 which results in proteasomal degradation.

The protein localises to the mitochondrion matrix. Functionally, as a component of the mitochondrial large ribosomal subunit, plays a role in mitochondrial translation. When present in mitochondria as a free protein not associated with the ribosome, associates with mitochondrial RNA polymerase POLRMT to activate transcription. Required for POLRMT stability. The chain is Large ribosomal subunit protein bL12m (MRPL12) from Bos taurus (Bovine).